We begin with the raw amino-acid sequence, 463 residues long: Histone acetyltransferase mst1 (463 aa).

One can recognise a Tudor-knot domain in the interval Val22–Leu74. The segment at Lys76–Pro145 is disordered. Positions Lys87–Pro99 are enriched in basic residues. Low complexity predominate over residues Pro111–Thr121. Positions Ala179–Pro451 constitute an MYST-type HAT domain. The C2HC MYST-type zinc finger occupies Val212 to Leu237. The ESA1-RPD3 motif motif lies at Arg262 to Tyr283. An N6-acetyllysine; by autocatalysis modification is found at Lys279. Acetyl-CoA contacts are provided by residues Ala320 to Thr324 and Gln329 to Lys335. Glu355 (proton donor/acceptor) is an active-site residue. Acetyl-CoA is bound at residue Ser359.

The protein belongs to the MYST (SAS/MOZ) family. Component of the NuA4 histone acetyltransferase complex. Interacts with arp4. Post-translationally, autoacetylation at Lys-279 is required for proper function.

It is found in the nucleus. Its subcellular location is the chromosome. The enzyme catalyses L-lysyl-[histone] + acetyl-CoA = N(6)-acetyl-L-lysyl-[histone] + CoA + H(+). It catalyses the reaction L-lysyl-[protein] + acetyl-CoA = N(6)-acetyl-L-lysyl-[protein] + CoA + H(+). It carries out the reaction 2-hydroxyisobutanoyl-CoA + L-lysyl-[protein] = N(6)-(2-hydroxyisobutanoyl)-L-lysyl-[protein] + CoA + H(+). The catalysed reaction is (2E)-butenoyl-CoA + L-lysyl-[protein] = N(6)-(2E)-butenoyl-L-lysyl-[protein] + CoA + H(+). Catalytic component of the NuA4 histone acetyltransferase (HAT) complex which is involved in epigenetic transcriptional activation of selected genes principally by acetylation of nucleosomal histones H4, H3, H2B, H2A and H2A variant H2A.Z. Acetylates histone H4 to form H4K5ac, H4K8ac, H4K12ac and H4K16ac, histone H3 to form H3K14ac, and histone H2A to form H2AK4ac and H2AK7ac. The NuA4 complex is involved in the DNA damage response and is required for chromosome segregation. The NuA4 complex plays a direct role in repair of DNA double-strand breaks (DSBs) through homologous recombination. Recruitment to promoters depends on H3K4me. Also acetylates non-histone proteins. In addition to protein acetyltransferase, can use different acyl-CoA substrates, such as 2-hydroxyisobutanoyl-CoA (2-hydroxyisobutyryl-CoA) or (2E)-butenoyl-CoA (crotonyl-CoA), and is able to mediate protein 2-hydroxyisobutyrylation and crotonylation, respectively. This Schizosaccharomyces pombe (strain 972 / ATCC 24843) (Fission yeast) protein is Histone acetyltransferase mst1.